The chain runs to 212 residues: 7-carboxy-7-deazaguanine synthase (212 aa).

Residues 22–24 and R37 each bind substrate; that span reads LQG. The Radical SAM core domain occupies 28–212; sequence NTGMPAVFVR…VQTHKWAGIE (185 aa). 3 residues coordinate [4Fe-4S] cluster: C41, C45, and C48. T50 contributes to the Mg(2+) binding site. Residue T78 coordinates substrate. S-adenosyl-L-methionine-binding positions include G80 and 122–124; that span reads SPK.

It belongs to the radical SAM superfamily. 7-carboxy-7-deazaguanine synthase family. In terms of assembly, homodimer. Requires [4Fe-4S] cluster as cofactor. The cofactor is S-adenosyl-L-methionine. Mg(2+) serves as cofactor.

The enzyme catalyses 6-carboxy-5,6,7,8-tetrahydropterin + H(+) = 7-carboxy-7-deazaguanine + NH4(+). The protein operates within purine metabolism; 7-cyano-7-deazaguanine biosynthesis. In terms of biological role, catalyzes the complex heterocyclic radical-mediated conversion of 6-carboxy-5,6,7,8-tetrahydropterin (CPH4) to 7-carboxy-7-deazaguanine (CDG), a step common to the biosynthetic pathways of all 7-deazapurine-containing compounds. The sequence is that of 7-carboxy-7-deazaguanine synthase from Neisseria meningitidis serogroup B (strain ATCC BAA-335 / MC58).